We begin with the raw amino-acid sequence, 23 residues long: NLMQFETLIMKVAGRSGVWYYGS.

Requires Ca(2+) as cofactor. Post-translationally, contains 7 disulfide bonds. In terms of tissue distribution, expressed by the venom gland.

It localises to the secreted. It catalyses the reaction a 1,2-diacyl-sn-glycero-3-phosphocholine + H2O = a 1-acyl-sn-glycero-3-phosphocholine + a fatty acid + H(+). In terms of biological role, snake venom phospholipase A2 (PLA2) that shows a moderate inhibition of ADP-induced human platelet aggregation when tested on platelet rich plasma. Exhibits high hydrolytic activities and prefers the anionic micelles (dPPC with deoxycholate) to the zwitterionic micelles (dPPC with Triton X-100). PLA2 catalyzes the calcium-dependent hydrolysis of the 2-acyl groups in 3-sn-phosphoglycerides. The protein is Acidic phospholipase A2 Ts-A5 of Trimeresurus stejnegeri (Chinese green tree viper).